A 453-amino-acid chain; its full sequence is Serine/threonine-protein phosphatase 2A regulatory subunit B'' subunit gamma (453 aa).

2 consecutive EF-hand domains span residues 273–308 (PSAL…TMTN) and 341–376 (KEPA…IQEL). The Ca(2+) site is built by Asp286, Asp288, Asn290, Met292, and Glu297.

Interacts with MCM3AP/GANP, PPP5C, and the phosphatase 2A core enzyme composed of the PPP2CA catalytic subunit and the constant regulatory subunit PPP2R1A. Finds in a complex with ABCB1, TFPI2 and PPP2R3C; leading to the dephosphorylation of ABCB1.

The protein localises to the nucleus. The protein resides in the cytoplasm. May regulate MCM3AP phosphorylation through phosphatase recruitment. May act as a negative regulator of ABCB1 expression and function through the dephosphorylation of ABCB1 by TFPI2/PPP2R3C complex. May play a role in the activation-induced cell death of B-cells. The sequence is that of Serine/threonine-protein phosphatase 2A regulatory subunit B'' subunit gamma (PPP2R3C) from Bos taurus (Bovine).